We begin with the raw amino-acid sequence, 211 residues long: dITP/XTP pyrophosphatase (211 aa).

7–12 serves as a coordination point for substrate; the sequence is TSNKKK. E43 and D72 together coordinate Mg(2+). D72 functions as the Proton acceptor in the catalytic mechanism. Substrate is bound by residues S73, 169-172, K190, and 195-196; these read FGYD and HR.

It belongs to the HAM1 NTPase family. In terms of assembly, homodimer. It depends on Mg(2+) as a cofactor.

The enzyme catalyses XTP + H2O = XMP + diphosphate + H(+). It carries out the reaction dITP + H2O = dIMP + diphosphate + H(+). It catalyses the reaction ITP + H2O = IMP + diphosphate + H(+). Pyrophosphatase that catalyzes the hydrolysis of nucleoside triphosphates to their monophosphate derivatives, with a high preference for the non-canonical purine nucleotides XTP (xanthosine triphosphate), dITP (deoxyinosine triphosphate) and ITP. Seems to function as a house-cleaning enzyme that removes non-canonical purine nucleotides from the nucleotide pool, thus preventing their incorporation into DNA/RNA and avoiding chromosomal lesions. The sequence is that of dITP/XTP pyrophosphatase from Hydrogenobaculum sp. (strain Y04AAS1).